Here is a 375-residue protein sequence, read N- to C-terminus: Mitogen-activated protein kinase 1 (375 aa).

One can recognise a Protein kinase domain in the interval 43 to 329 (RPPIMPIGRG…VEEALAHPYL (287 aa)). ATP is bound by residues 49–57 (IGRGAYGIV) and Lys-72. The Proton acceptor role is filled by Asp-169. Phosphothreonine is present on Thr-201. The short motif at 201–203 (TEY) is the TXY element. Tyr-203 is subject to Phosphotyrosine. Residue Thr-206 is modified to Phosphothreonine.

Belongs to the protein kinase superfamily. CMGC Ser/Thr protein kinase family. MAP kinase subfamily. Mg(2+) serves as cofactor. In terms of processing, activated by wounding and UV-C in a cultivar-dependent manner; phosphorylated in cv. Pungchon but not in cv. Subicho.

It carries out the reaction L-seryl-[protein] + ATP = O-phospho-L-seryl-[protein] + ADP + H(+). The catalysed reaction is L-threonyl-[protein] + ATP = O-phospho-L-threonyl-[protein] + ADP + H(+). Activated by threonine and tyrosine phosphorylation. Stress-inducible protein kinase involved in oxidative stress-mediated and innate immune MAP kinase signaling cascades. This Capsicum annuum (Capsicum pepper) protein is Mitogen-activated protein kinase 1.